The primary structure comprises 230 residues: Leucyl/phenylalanyl-tRNA--protein transferase (230 aa).

It belongs to the L/F-transferase family.

The protein localises to the cytoplasm. It carries out the reaction N-terminal L-lysyl-[protein] + L-leucyl-tRNA(Leu) = N-terminal L-leucyl-L-lysyl-[protein] + tRNA(Leu) + H(+). The catalysed reaction is N-terminal L-arginyl-[protein] + L-leucyl-tRNA(Leu) = N-terminal L-leucyl-L-arginyl-[protein] + tRNA(Leu) + H(+). It catalyses the reaction L-phenylalanyl-tRNA(Phe) + an N-terminal L-alpha-aminoacyl-[protein] = an N-terminal L-phenylalanyl-L-alpha-aminoacyl-[protein] + tRNA(Phe). Functions in the N-end rule pathway of protein degradation where it conjugates Leu, Phe and, less efficiently, Met from aminoacyl-tRNAs to the N-termini of proteins containing an N-terminal arginine or lysine. The polypeptide is Leucyl/phenylalanyl-tRNA--protein transferase (Syntrophotalea carbinolica (strain DSM 2380 / NBRC 103641 / GraBd1) (Pelobacter carbinolicus)).